A 327-amino-acid chain; its full sequence is Quinone oxidoreductase 1 (327 aa).

Residues 42 to 46 (FIDTY), tyrosine 130, 152 to 153 (GV), 173 to 177 (GTAQK), tyrosine 192, serine 216, 238 to 241 (FGNS), 264 to 266 (PSL), and arginine 317 each bind NADP(+).

The protein belongs to the zinc-containing alcohol dehydrogenase family. Quinone oxidoreductase subfamily. As to quaternary structure, homodimer.

The enzyme catalyses 2 a quinone + NADPH + H(+) = 2 a 1,4-benzosemiquinone + NADP(+). This chain is Quinone oxidoreductase 1 (qorA), found in Escherichia coli (strain K12).